The primary structure comprises 78 residues: Translational regulator CsrA (78 aa).

It belongs to the CsrA/RsmA family. Homodimer; the beta-strands of each monomer intercalate to form a hydrophobic core, while the alpha-helices form wings that extend away from the core.

Its subcellular location is the cytoplasm. Functionally, a translational regulator that binds mRNA to regulate translation initiation and/or mRNA stability. Usually binds in the 5'-UTR at or near the Shine-Dalgarno sequence preventing ribosome-binding, thus repressing translation. Its main target seems to be the major flagellin gene, while its function is anatagonized by FliW. The polypeptide is Translational regulator CsrA (Borrelia hermsii (strain HS1 / DAH)).